The sequence spans 921 residues: Protein translocase subunit SecA (921 aa).

ATP-binding positions include glutamine 87, glycine 105–threonine 109, and aspartate 516. Positions 905, 907, 916, and 917 each coordinate Zn(2+).

It belongs to the SecA family. As to quaternary structure, monomer and homodimer. Part of the essential Sec protein translocation apparatus which comprises SecA, SecYEG and auxiliary proteins SecDF-YajC and YidC. It depends on Zn(2+) as a cofactor.

The protein localises to the cell inner membrane. Its subcellular location is the cytoplasm. It catalyses the reaction ATP + H2O + cellular proteinSide 1 = ADP + phosphate + cellular proteinSide 2.. Functionally, part of the Sec protein translocase complex. Interacts with the SecYEG preprotein conducting channel. Has a central role in coupling the hydrolysis of ATP to the transfer of proteins into and across the cell membrane, serving both as a receptor for the preprotein-SecB complex and as an ATP-driven molecular motor driving the stepwise translocation of polypeptide chains across the membrane. The polypeptide is Protein translocase subunit SecA (Polaromonas sp. (strain JS666 / ATCC BAA-500)).